A 171-amino-acid polypeptide reads, in one-letter code: Lipoprotein signal peptidase (171 aa).

Transmembrane regions (helical) follow at residues S8 to V28, W64 to L84, and S96 to V118. Active-site residues include D120 and D138. A helical transmembrane segment spans residues V133 to F153.

It belongs to the peptidase A8 family.

The protein localises to the cell inner membrane. The enzyme catalyses Release of signal peptides from bacterial membrane prolipoproteins. Hydrolyzes -Xaa-Yaa-Zaa-|-(S,diacylglyceryl)Cys-, in which Xaa is hydrophobic (preferably Leu), and Yaa (Ala or Ser) and Zaa (Gly or Ala) have small, neutral side chains.. It functions in the pathway protein modification; lipoprotein biosynthesis (signal peptide cleavage). This protein specifically catalyzes the removal of signal peptides from prolipoproteins. The chain is Lipoprotein signal peptidase from Haemophilus influenzae (strain 86-028NP).